Reading from the N-terminus, the 151-residue chain is Sigma factor binding protein 1, chloroplastic (151 aa).

Positions 1-13 (MESSSSTFLTTTS) are enriched in low complexity. Disordered regions lie at residues 1-41 (MESS…KPIK) and 66-93 (TGQDAVDLQPEPIYSPSSDDHNLSPPAE). A chloroplast-targeting transit peptide spans 1-54 (MESSSSTFLTTTSLDKKKPSPVSRKSPKQKKKTTSTNKPIKVRYISNPMRVQTC). The Bipartite nuclear localization signal signature appears at 16 to 32 (KKKPSPVSRKSPKQKKK). Positions 58–67 (FRELVQELTG) match the VQ motif.

As to quaternary structure, interacts with the sigma factor SIGA in chloroplast. Interacts with WRKY25 and WRKY33 in the nucleus. As to expression, expressed in leaves and roots, but not in flowers.

It is found in the plastid. It localises to the chloroplast. Its subcellular location is the nucleus. Functionally, contributes to plant defense. May regulate chloroplast metabolism upon infection with pathogens such as Pseudomonas syringae. Functions as activator of WRKY33 in plant defense against necrotrophic pathogens by stimulating the DNA-binding activity of WRKY33. The protein is Sigma factor binding protein 1, chloroplastic (SIB1) of Arabidopsis thaliana (Mouse-ear cress).